Consider the following 566-residue polypeptide: Serine/threonine-protein kinase PknE (566 aa).

At 1–337 (MDGTAESREG…PLPRSARQPW (337 aa)) the chain is on the cytoplasmic side. Phosphoserine; by autocatalysis is present on serine 7. Phosphothreonine; by autocatalysis is present on threonine 11. The region spanning 16 to 275 (YRLRRLVGRG…DLSAAAHAAL (260 aa)) is the Protein kinase domain. Residues 22 to 30 (VGRGGMGDV) and lysine 45 contribute to the ATP site. Threonine 50 and threonine 59 each carry phosphothreonine; by autocatalysis. Aspartate 139 functions as the Proton acceptor in the catalytic mechanism. Residues threonine 170, threonine 175, and threonine 178 each carry the phosphothreonine; by autocatalysis modification. The segment at 296-330 (PVPSTHPVSPGTRWPQPTPWAGGAPPWGPPSSPLP) is disordered. A helical transmembrane segment spans residues 338–358 (LWVGVAVAVVVALAGGLGIAL). Residues 359 to 566 (AHPWRSSGPR…DPSWLARLIG (208 aa)) are Extracellular-facing.

The protein belongs to the protein kinase superfamily. Ser/Thr protein kinase family. In terms of assembly, homodimer. In terms of processing, autophosphorylated on serine and threonine residues. Dephosphorylated by PstP.

The protein resides in the cell membrane. It carries out the reaction L-seryl-[protein] + ATP = O-phospho-L-seryl-[protein] + ADP + H(+). It catalyses the reaction L-threonyl-[protein] + ATP = O-phospho-L-threonyl-[protein] + ADP + H(+). In terms of biological role, a serine/threonine-protein kinase, acts on HupB in vitro, modifying at least 2 Ser and 8 Thr residues. Important for bacterial survival in the host during infection. In Mycobacterium tuberculosis (strain ATCC 25177 / H37Ra), this protein is Serine/threonine-protein kinase PknE.